Here is an 837-residue protein sequence, read N- to C-terminus: V-type proton ATPase 116 kDa subunit a 1 (837 aa).

The Cytoplasmic segment spans residues 1-388 (MGELFRSEEM…DAYGIGTYRE (388 aa)). Phosphothreonine occurs at positions 250 and 360. Tyr-364 is subject to Phosphotyrosine. The chain crosses the membrane as a helical span at residues 389-407 (INPAPYTIITFPFLFAVMF). At 408–409 (GD) the chain is on the vacuolar side. Residues 410–426 (FGHGILMTLFAVWMVLR) form a helical membrane-spanning segment. At 427–441 (ESRILSQKNENEMFS) the chain is on the cytoplasmic side. Residues 442-471 (TVFSGRYIILLMGVFSMYTGLIYNDCFSKS) traverse the membrane as a helical segment. The Vacuolar portion of the chain corresponds to 472–534 (LNIFGSSWSV…ATNKLTFLNS (63 aa)). The chain crosses the membrane as a helical span at residues 535–554 (FKMKMSVILGIIHMLFGVSL). Residues 555 to 572 (SLFNHIYFKKPLNIYFGF) lie on the Cytoplasmic side of the membrane. The helical transmembrane segment at 573-593 (IPEIIFMTSLFGYLVILIFYK) threads the bilayer. Residues 594-638 (WTAYDAHTSENAPSLLIHFINMFLFSYPESGYSMLYSGQKGIQCF) are Vacuolar-facing. A helical membrane pass occupies residues 639-658 (LVVVALLCVPWMLLFKPLVL). Residues 659–724 (RRQYLRRKHL…ATMVHQAIHT (66 aa)) are Cytoplasmic-facing. The helical transmembrane segment at 725-749 (IEYCLGCISNTASYLRLWALSLAHA) threads the bilayer. Residues 750-770 (QLSEVLWTMVIHIGLSVKSLA) lie on the Vacuolar side of the membrane. Residues 771-809 (GGLVLFFFFTAFATLTVAILLIMEGLSAFLHALRLHWVE) form a helical membrane-spanning segment. The Cytoplasmic segment spans residues 810–837 (FQNKFYSGTGFKFLPFSFEHIREGKFGE).

This sequence belongs to the V-ATPase 116 kDa subunit family. In terms of assembly, V-ATPase is a heteromultimeric enzyme made up of two complexes: the ATP-hydrolytic V1 complex and the proton translocation V0 complex. The V1 complex consists of three catalytic AB heterodimers that form a heterohexamer, three peripheral stalks each consisting of EG heterodimers, one central rotor including subunits D and F, and the regulatory subunits C and H. The proton translocation complex V0 consists of the proton transport subunit a, a ring of proteolipid subunits c9c'', rotary subunit d, subunits e and f, and the accessory subunits ATP6AP1/Ac45 and ATP6AP2/PRR. Interacts with SPAAR.

The protein resides in the cytoplasmic vesicle. It is found in the clathrin-coated vesicle membrane. The protein localises to the secretory vesicle. Its subcellular location is the synaptic vesicle membrane. It localises to the melanosome. Functionally, subunit of the V0 complex of vacuolar(H+)-ATPase (V-ATPase), a multisubunit enzyme composed of a peripheral complex (V1) that hydrolyzes ATP and a membrane integral complex (V0) that translocates protons. V-ATPase is responsible for the acidification of various organelles, such as lysosomes, endosomes, the trans-Golgi network, and secretory granules, including synaptic vesicles. In certain cell types, can be exported to the plasma membrane, where it is involved in the acidification of the extracellular environment. Required for assembly and activity of the vacuolar ATPase. Through its action on compartment acidification, plays an essential role in neuronal development in terms of integrity and connectivity of neurons. This is V-type proton ATPase 116 kDa subunit a 1 (ATP6V0A1) from Pongo abelii (Sumatran orangutan).